A 401-amino-acid polypeptide reads, in one-letter code: Argininosuccinate synthase (401 aa).

Residues 10 to 18 (AYSGGVDTS) and Ala38 contribute to the ATP site. Tyr89 provides a ligand contact to L-citrulline. ATP is bound at residue Gly119. 3 residues coordinate L-aspartate: Thr121, Asn125, and Asp126. Residue Asn125 participates in L-citrulline binding. Positions 129, 177, 186, 262, and 274 each coordinate L-citrulline.

This sequence belongs to the argininosuccinate synthase family. Type 1 subfamily. As to quaternary structure, homotetramer.

Its subcellular location is the cytoplasm. It catalyses the reaction L-citrulline + L-aspartate + ATP = 2-(N(omega)-L-arginino)succinate + AMP + diphosphate + H(+). The protein operates within amino-acid biosynthesis; L-arginine biosynthesis; L-arginine from L-ornithine and carbamoyl phosphate: step 2/3. In Synechococcus sp. (strain WH7803), this protein is Argininosuccinate synthase.